The following is a 475-amino-acid chain: Putative amidase AmiD (475 aa).

Active-site charge relay system residues include K93 and S166. S190 serves as the catalytic Acyl-ester intermediate.

This sequence belongs to the amidase family.

The enzyme catalyses a monocarboxylic acid amide + H2O = a monocarboxylate + NH4(+). This chain is Putative amidase AmiD (amiD), found in Mycobacterium bovis (strain ATCC BAA-935 / AF2122/97).